The primary structure comprises 217 residues: Somatotropin (217 aa).

The first 26 residues, 1–26 (MAAGSRTSLLLAFALLCLPWLQEGSA), serve as a signal peptide directing secretion. His-44 is a binding site for Zn(2+). Cys-79 and Cys-191 form a disulfide bridge. A Phosphoserine modification is found at Ser-132. Glu-200 is a binding site for Zn(2+). A disulfide bridge connects residues Cys-208 and Cys-215.

Belongs to the somatotropin/prolactin family.

The protein localises to the secreted. Functionally, plays an important role in growth control. Its major role in stimulating body growth is to stimulate the liver and other tissues to secrete IGF1. It stimulates both the differentiation and proliferation of myoblasts. It also stimulates amino acid uptake and protein synthesis in muscle and other tissues. This Macaca mulatta (Rhesus macaque) protein is Somatotropin (GH1).